A 195-amino-acid chain; its full sequence is Probable GTP-binding protein EngB (195 aa).

The EngB-type G domain occupies 24–195; sequence GLSEVGLSGR…QIWNVIEKYL (172 aa). Residues 32–39, 59–63, 77–80, 144–147, and 176–178 contribute to the GTP site; these read GRSNVGKS, GKTQT, DVPG, TKED, and YSS. Mg(2+) is bound by residues serine 39 and threonine 61.

It belongs to the TRAFAC class TrmE-Era-EngA-EngB-Septin-like GTPase superfamily. EngB GTPase family. Requires Mg(2+) as cofactor.

In terms of biological role, necessary for normal cell division and for the maintenance of normal septation. The protein is Probable GTP-binding protein EngB of Staphylococcus saprophyticus subsp. saprophyticus (strain ATCC 15305 / DSM 20229 / NCIMB 8711 / NCTC 7292 / S-41).